The following is a 608-amino-acid chain: Epsin-3 (608 aa).

A 1,2-diacyl-sn-glycero-3-phospho-(1D-myo-inositol-4,5-bisphosphate)-binding residues include arginine 8, lysine 11, arginine 25, asparagine 30, arginine 63, and histidine 73. Residues 12-144 (NIVHNYSEAE…KDEERLRQER (133 aa)) enclose the ENTH domain. Disordered regions lie at residues 150–266 (TKER…QSSI) and 281–475 (STHC…GPSA). Residues 174–189 (GSPSSYTSASSSPRYA) show a composition bias toward low complexity. Phosphoserine occurs at positions 184 and 185. Residues 202–221 (EEELQLQLALAMSREEAEKG) form the UIM domain. Basic and acidic residues-rich tracts occupy residues 214–229 (SREE…KGDD) and 240–260 (GQRR…EKLK). Repeat copies occupy residues 287–289 (DPW), 310–312 (DPW), 337–339 (EPW), 353–355 (DPW), 370–372 (DPW), 495–497 (NPF), and 508–510 (NPF). The tract at residues 287-372 (DPWDIPGLRP…KLPSTGVDPW (86 aa)) is 5 X 3 AA repeats of [DE]-P-W. A compositionally biased stretch (pro residues) spans 346–363 (PSGPPITDPWAPSSPTPK). A 3 X 3 AA repeats of N-P-F region spans residues 495-607 (NPFLTGLSAP…LPPQAGTNPF (113 aa)). 2 disordered regions span residues 498-530 (LTGL…SPAL) and 575-608 (GAFA…NPFL). The span at 578–588 (APPPASLPQPL) shows a compositional bias: pro residues. Copy 3 of the repeat occupies 605 to 607 (NPF).

The protein belongs to the epsin family.

Its subcellular location is the cytoplasm. It is found in the cell cortex. It localises to the perinuclear region. The protein resides in the cytoplasmic vesicle. The protein localises to the clathrin-coated vesicle. Its subcellular location is the nucleus. In Rattus norvegicus (Rat), this protein is Epsin-3 (Epn3).